A 594-amino-acid chain; its full sequence is Pentatricopeptide repeat-containing protein At1g15480, mitochondrial (594 aa).

The N-terminal 67 residues, 1-67 (MFALSKVLRR…WSSSTGRRSL (67 aa)), are a transit peptide targeting the mitochondrion. The segment covering 62–75 (TGRRSLSSDAGAKT) has biased composition (low complexity). Residues 62 to 109 (TGRRSLSSDAGAKTTGDDDDLEDKNVDLATPDETSSDSEDGEEFSGDE) are disordered. Acidic residues predominate over residues 95-109 (TSSDSEDGEEFSGDE). PPR repeat units lie at residues 226 to 260 (GELVYRTLLANHVATSNVRTAEAVFNKMKDLGFPL), 261 to 294 (STFTCNQMLILYKRVDKKKIADVLLLLEKENLKP), 295 to 329 (NLNTYKILIDTKGSSNDITGMEQIVETMKSEGVEL), 330 to 364 (DLRARALIARHYASAGLKEKAEKVLKEMEGESLEE), 432 to 466 (SSNVYSVLLRVYVDHKMVSEGKDLVKQMSDSGCNI), 467 to 502 (GALTWDAVIKLYVEAGEVEKAESSLSKAIQSKQIKP), and 503 to 537 (LMSSFMYLMHEYVRRGDVHNTEKIFQRMKQAGYQS).

It belongs to the PPR family. P subfamily.

The protein localises to the mitochondrion. The polypeptide is Pentatricopeptide repeat-containing protein At1g15480, mitochondrial (Arabidopsis thaliana (Mouse-ear cress)).